Here is a 130-residue protein sequence, read N- to C-terminus: Anti-adapter protein IraD (130 aa).

It belongs to the GpW/Gp25 family. IraD subfamily. Interacts with RssB.

The protein localises to the cytoplasm. Its function is as follows. Inhibits RpoS proteolysis by regulating RssB activity, thereby increasing the stability of the sigma stress factor RpoS during oxidative stress. Its effect on RpoS stability is due to its interaction with RssB, which probably blocks the interaction of RssB with RpoS, and the consequent delivery of the RssB-RpoS complex to the ClpXP protein degradation pathway. The sequence is that of Anti-adapter protein IraD from Escherichia coli O139:H28 (strain E24377A / ETEC).